Consider the following 439-residue polypeptide: Histidine--tRNA ligase (439 aa).

It belongs to the class-II aminoacyl-tRNA synthetase family. Homodimer.

Its subcellular location is the cytoplasm. It carries out the reaction tRNA(His) + L-histidine + ATP = L-histidyl-tRNA(His) + AMP + diphosphate + H(+). This chain is Histidine--tRNA ligase, found in Leptospira borgpetersenii serovar Hardjo-bovis (strain L550).